A 921-amino-acid polypeptide reads, in one-letter code: Protein translocase subunit SecA (921 aa).

ATP is bound by residues Q87, 105–109 (GEGKT), and D515. The disordered stretch occupies residues 872 to 901 (DMEVAGSTGDRGAALDIQPAPVRSGPKIGR). C905, C907, C916, and C917 together coordinate Zn(2+).

Belongs to the SecA family. Monomer and homodimer. Part of the essential Sec protein translocation apparatus which comprises SecA, SecYEG and auxiliary proteins SecDF-YajC and YidC. Zn(2+) serves as cofactor.

The protein resides in the cell inner membrane. It localises to the cytoplasm. It carries out the reaction ATP + H2O + cellular proteinSide 1 = ADP + phosphate + cellular proteinSide 2.. Part of the Sec protein translocase complex. Interacts with the SecYEG preprotein conducting channel. Has a central role in coupling the hydrolysis of ATP to the transfer of proteins into and across the cell membrane, serving both as a receptor for the preprotein-SecB complex and as an ATP-driven molecular motor driving the stepwise translocation of polypeptide chains across the membrane. This Polynucleobacter asymbioticus (strain DSM 18221 / CIP 109841 / QLW-P1DMWA-1) (Polynucleobacter necessarius subsp. asymbioticus) protein is Protein translocase subunit SecA.